We begin with the raw amino-acid sequence, 604 residues long: UvrABC system protein C (604 aa).

In terms of domain architecture, GIY-YIG spans 17-95 (SQPGVYRMLN…IKSLAPRYNI (79 aa)). Residues 204–239 (DEVLKTIEQKMFEASDRQAYEQAVLFRDQMQALRMI) enclose the UVR domain.

This sequence belongs to the UvrC family. As to quaternary structure, interacts with UvrB in an incision complex.

The protein resides in the cytoplasm. The UvrABC repair system catalyzes the recognition and processing of DNA lesions. UvrC both incises the 5' and 3' sides of the lesion. The N-terminal half is responsible for the 3' incision and the C-terminal half is responsible for the 5' incision. The sequence is that of UvrABC system protein C from Nitrosomonas eutropha (strain DSM 101675 / C91 / Nm57).